The following is a 153-amino-acid chain: UPF0158 protein PA5073 (153 aa).

It belongs to the UPF0158 family.

This Pseudomonas aeruginosa (strain ATCC 15692 / DSM 22644 / CIP 104116 / JCM 14847 / LMG 12228 / 1C / PRS 101 / PAO1) protein is UPF0158 protein PA5073.